We begin with the raw amino-acid sequence, 330 residues long: MISFSSFYQQIADSNLQHWLETLPAILGKWQREHKHGNLPKWEKVLNKLHYPAPDRVDFVSSVTVGTGEQLTPGEKEKLENLLRLFMPWRKGPFHIHGIHIDTEWRSDWKWDRVSPHISPLQNRTVLDVGCGSGYHMWRMLGAGAKRVVGIDPSPLFLCQFEAVKRLSGENHPVHLLPLGIEELPPLDAFDTVFSMGVLYHRRSPIDHLLQLRDQLRMGGELVLETLVIDGDENAVLVPQDRYGKMNNVWFIPSVAALMLWLKKCDFTDIRCVDTDVTALAEQRRTDWMPNESLVEYLDPNDITKTIEGYPAPKRATIIAVKNQPNQDLT.

Carboxy-S-adenosyl-L-methionine is bound by residues lysine 91, tryptophan 105, lysine 110, glycine 130, 152–154 (DPS), 181–182 (IE), methionine 196, tyrosine 200, and arginine 315.

Belongs to the class I-like SAM-binding methyltransferase superfamily. CmoB family. In terms of assembly, homotetramer.

The catalysed reaction is carboxy-S-adenosyl-L-methionine + 5-hydroxyuridine(34) in tRNA = 5-carboxymethoxyuridine(34) in tRNA + S-adenosyl-L-homocysteine + H(+). Catalyzes carboxymethyl transfer from carboxy-S-adenosyl-L-methionine (Cx-SAM) to 5-hydroxyuridine (ho5U) to form 5-carboxymethoxyuridine (cmo5U) at position 34 in tRNAs. The chain is tRNA U34 carboxymethyltransferase from Shewanella sp. (strain ANA-3).